The chain runs to 138 residues: Large ribosomal subunit protein uL16 (138 aa).

Residues 1-15 (MLSPRKVKYRKKQRG) show a composition bias toward basic residues. A disordered region spans residues 1–21 (MLSPRKVKYRKKQRGRLSGEA).

Belongs to the universal ribosomal protein uL16 family. As to quaternary structure, part of the 50S ribosomal subunit.

Its function is as follows. Binds 23S rRNA and is also seen to make contacts with the A and possibly P site tRNAs. In Borrelia duttonii (strain Ly), this protein is Large ribosomal subunit protein uL16.